The primary structure comprises 179 residues: Cytochrome b6-f complex iron-sulfur subunit (179 aa).

A helical transmembrane segment spans residues 21-43 (LLTFGTVTGVALGALYPVVNYFI). In terms of domain architecture, Rieske spans 61 to 162 (GNDVSVTKFL…TNVSDDKIVL (102 aa)). The [2Fe-2S] cluster site is built by Cys108, His110, Cys126, and His129. An intrachain disulfide couples Cys113 to Cys128.

Belongs to the Rieske iron-sulfur protein family. As to quaternary structure, the 4 large subunits of the cytochrome b6-f complex are cytochrome b6, subunit IV (17 kDa polypeptide, PetD), cytochrome f and the Rieske protein, while the 4 small subunits are PetG, PetL, PetM and PetN. The complex functions as a dimer. [2Fe-2S] cluster serves as cofactor.

The protein resides in the cellular thylakoid membrane. The enzyme catalyses 2 oxidized [plastocyanin] + a plastoquinol + 2 H(+)(in) = 2 reduced [plastocyanin] + a plastoquinone + 4 H(+)(out). In terms of biological role, component of the cytochrome b6-f complex, which mediates electron transfer between photosystem II (PSII) and photosystem I (PSI), cyclic electron flow around PSI, and state transitions. The sequence is that of Cytochrome b6-f complex iron-sulfur subunit from Nostoc punctiforme (strain ATCC 29133 / PCC 73102).